Here is a 409-residue protein sequence, read N- to C-terminus: Serine/threonine transporter SstT (409 aa).

The next 9 helical transmembrane spans lie at 24–44, 48–68, 82–102, 142–162, 194–214, 218–238, 292–312, 319–339, and 365–385; these read LALGIVIGSVSPQLGLAAGLF, FVGALKAVAPVLVFILVAATI, IIVLYLIGTFSAALTAVIAGM, AIANANYIGILAWALVLGAAL, LGIFGLVSSTIAETGFGALAG, LLAVLLGCMAFIALAVNPAIV, IPLGATVNMGGAAITITVLAM, GIQVDFATALLLSLVATVSAC, and VAMQVVAVGFIIGVIQDSAET.

This sequence belongs to the dicarboxylate/amino acid:cation symporter (DAACS) (TC 2.A.23) family.

The protein localises to the cell inner membrane. It carries out the reaction L-serine(in) + Na(+)(in) = L-serine(out) + Na(+)(out). The enzyme catalyses L-threonine(in) + Na(+)(in) = L-threonine(out) + Na(+)(out). Functionally, involved in the import of serine and threonine into the cell, with the concomitant import of sodium (symport system). The polypeptide is Serine/threonine transporter SstT (Neisseria gonorrhoeae (strain NCCP11945)).